The following is a 514-amino-acid chain: 2,3-bisphosphoglycerate-independent phosphoglycerate mutase (514 aa).

Residues aspartate 14 and serine 64 each contribute to the Mn(2+) site. Serine 64 (phosphoserine intermediate) is an active-site residue. Residues histidine 125, 155-156, arginine 187, arginine 193, 263-266, and lysine 336 contribute to the substrate site; these read RD and RADR. The Mn(2+) site is built by aspartate 403, histidine 407, aspartate 444, histidine 445, and histidine 463.

The protein belongs to the BPG-independent phosphoglycerate mutase family. Monomer. Requires Mn(2+) as cofactor.

It catalyses the reaction (2R)-2-phosphoglycerate = (2R)-3-phosphoglycerate. It functions in the pathway carbohydrate degradation; glycolysis; pyruvate from D-glyceraldehyde 3-phosphate: step 3/5. In terms of biological role, catalyzes the interconversion of 2-phosphoglycerate and 3-phosphoglycerate. The polypeptide is 2,3-bisphosphoglycerate-independent phosphoglycerate mutase (Shigella dysenteriae serotype 1 (strain Sd197)).